The following is a 238-amino-acid chain: Ribonuclease PH (238 aa).

Residues R86 and 124-126 (GTR) each bind phosphate.

Belongs to the RNase PH family. As to quaternary structure, homohexameric ring arranged as a trimer of dimers.

It carries out the reaction tRNA(n+1) + phosphate = tRNA(n) + a ribonucleoside 5'-diphosphate. Its function is as follows. Phosphorolytic 3'-5' exoribonuclease that plays an important role in tRNA 3'-end maturation. Removes nucleotide residues following the 3'-CCA terminus of tRNAs; can also add nucleotides to the ends of RNA molecules by using nucleoside diphosphates as substrates, but this may not be physiologically important. Probably plays a role in initiation of 16S rRNA degradation (leading to ribosome degradation) during starvation. The chain is Ribonuclease PH from Rhizorhabdus wittichii (strain DSM 6014 / CCUG 31198 / JCM 15750 / NBRC 105917 / EY 4224 / RW1) (Sphingomonas wittichii).